The sequence spans 369 residues: MAKDEKKAALEAALKKIEKNFGKGAVMRMGEKVDTQISTVPSGSLALDAALGVGGYPRGRIVEIYGPESSGKTTVALHAVAEVQKRGGTAAYIDAENAMDPAYAEALGVDIDQLILSQPNTGEEGLQIADTLISSGAIDIVVVDSVAALVPRAEIEGEMGDSHVGLQARLMSQALRKLSGTIAKTKTIAIFINQIREKVGVMFGNPETTPGGRALKFYSTIRLEVRRAEQIKQSTNVIGNRVKIKVVKNKVAPPFKVAEVDIMYGQGISQSGELLDMAADQDIVDKAGAWYSYHGEKIGQGRENAKKYLEEHPDVSEDIQTQVRKAYGIDAESLEEKEDPEKVKEQRAKKAAPGEEKPAEPASPEKTDK.

66 to 73 (GPESSGKT) provides a ligand contact to ATP. The tract at residues 328 to 369 (GIDAESLEEKEDPEKVKEQRAKKAAPGEEKPAEPASPEKTDK) is disordered. The span at 339–369 (DPEKVKEQRAKKAAPGEEKPAEPASPEKTDK) shows a compositional bias: basic and acidic residues.

The protein belongs to the RecA family.

The protein resides in the cytoplasm. Its function is as follows. Can catalyze the hydrolysis of ATP in the presence of single-stranded DNA, the ATP-dependent uptake of single-stranded DNA by duplex DNA, and the ATP-dependent hybridization of homologous single-stranded DNAs. It interacts with LexA causing its activation and leading to its autocatalytic cleavage. This is Protein RecA from Lactobacillus delbrueckii subsp. bulgaricus (strain ATCC BAA-365 / Lb-18).